The following is a 471-amino-acid chain: Tryptophanase (471 aa).

K270 is subject to N6-(pyridoxal phosphate)lysine.

Belongs to the beta-eliminating lyase family. Homotetramer. Pyridoxal 5'-phosphate serves as cofactor.

It catalyses the reaction L-tryptophan + H2O = indole + pyruvate + NH4(+). The protein operates within amino-acid degradation; L-tryptophan degradation via pyruvate pathway; indole and pyruvate from L-tryptophan: step 1/1. This is Tryptophanase from Histophilus somni (strain 2336) (Haemophilus somnus).